The chain runs to 299 residues: Tyrosine recombinase XerC (299 aa).

The 85-residue stretch at 1–85 (MERQLDAYCE…AVRGLYHYLN (85 aa)) folds into the Core-binding (CB) domain. The region spanning 106–285 (RLPKTLDTDR…DFQHLAAVYD (180 aa)) is the Tyr recombinase domain. Active-site residues include R146, K170, H237, R240, and H263. The active-site O-(3'-phospho-DNA)-tyrosine intermediate is the Y272.

Belongs to the 'phage' integrase family. XerC subfamily. In terms of assembly, forms a cyclic heterotetrameric complex composed of two molecules of XerC and two molecules of XerD.

It localises to the cytoplasm. Functionally, site-specific tyrosine recombinase, which acts by catalyzing the cutting and rejoining of the recombining DNA molecules. The XerC-XerD complex is essential to convert dimers of the bacterial chromosome into monomers to permit their segregation at cell division. It also contributes to the segregational stability of plasmids. This chain is Tyrosine recombinase XerC, found in Pseudomonas fluorescens (strain Pf0-1).